Reading from the N-terminus, the 319-residue chain is tRNA-cytidine(32) 2-sulfurtransferase (319 aa).

The PP-loop motif signature appears at 43-48 (SGGKDS). C118, C121, and C209 together coordinate [4Fe-4S] cluster.

The protein belongs to the TtcA family. Homodimer. Mg(2+) is required as a cofactor. The cofactor is [4Fe-4S] cluster.

Its subcellular location is the cytoplasm. It catalyses the reaction cytidine(32) in tRNA + S-sulfanyl-L-cysteinyl-[cysteine desulfurase] + AH2 + ATP = 2-thiocytidine(32) in tRNA + L-cysteinyl-[cysteine desulfurase] + A + AMP + diphosphate + H(+). It functions in the pathway tRNA modification. In terms of biological role, catalyzes the ATP-dependent 2-thiolation of cytidine in position 32 of tRNA, to form 2-thiocytidine (s(2)C32). The sulfur atoms are provided by the cysteine/cysteine desulfurase (IscS) system. The sequence is that of tRNA-cytidine(32) 2-sulfurtransferase from Neisseria gonorrhoeae (strain NCCP11945).